We begin with the raw amino-acid sequence, 275 residues long: Lectin DB58 (275 aa).

Positions 1 to 22 (MASSTVSVVLSLFLLLLTQAYS) are cleaved as a signal peptide. Asn-34 and Asn-101 each carry an N-linked (GlcNAc...) asparagine glycan.

This sequence belongs to the leguminous lectin family. Heterodimer, composed of an alpha and a beta subunit derived from a single precursor. In terms of processing, leu-264 is missing in a major portion of the beta subunit, suggesting an origin by sequential removal of amino acids rather than a processing by endoproteolytic cleavage.

Metalloglycoprotein, containing Ca, Mg, Mn, and Zn and the carbohydrates galactose, glucosamine, mannose, and fucose. It agglutinates erythrocytes of blood group A1. This Vigna unguiculata subsp. cylindrica (Horse gram) protein is Lectin DB58.